We begin with the raw amino-acid sequence, 900 residues long: Formin-like protein 5 (900 aa).

Residues 15–32 form a helical; Signal-anchor membrane-spanning segment; the sequence is SRLVFWLILFSGLLVITL. The segment at 136–209 is disordered; the sequence is RNLATKPGSS…PVSPAKKKED (74 aa). Residues 160–173 show a composition bias toward pro residues; that stretch reads PPRPPTRPKSPPPR. A helical transmembrane segment spans residues 214-234; the sequence is IIIAVVVTAVSTFLLAALFFL. 2 disordered regions span residues 273-440 and 849-900; these read SVKG…DAPK and ARGR…SDSD. The span at 281-304 shows a compositional bias: polar residues; sequence HQSFNIYSNQGKMSSFDGSNSDTS. Positions 307–316 are enriched in basic and acidic residues; the sequence is LEERLSHEGL. The span at 359-368 shows a compositional bias: low complexity; it reads FLKVSSKKAS. Over residues 369–429 the composition is skewed to pro residues; sequence APPPPVPAPQ…GPKAPRPPSG (61 aa). Residues 433–865 form the FH2 domain; sequence ALDDDAPKTK…MARKQGSTAS (433 aa). Over residues 860–876 the composition is skewed to polar residues; it reads QGSTASASSETPRQTPS.

The protein belongs to the formin-like family. Class-I subfamily. As to expression, expressed in the endosperm. Localizes to the cell plate, a plant-specific membranous component that is assembled at the plane of cell division.

It is found in the membrane. Its function is as follows. Might be involved in the organization and polarity of the actin cytoskeleton. Interacts with the barbed end of actin filaments and nucleates actin-filament polymerization in vitro. Seems to play a role in cytokinesis. This Arabidopsis thaliana (Mouse-ear cress) protein is Formin-like protein 5 (FH5).